Here is a 400-residue protein sequence, read N- to C-terminus: Sphingosine 1-phosphate receptor 5 (400 aa).

Over 1 to 41 (MEPGLLRPAPVSEVIVLHYNYTGKLRGARYQPGAGLRADAA) the chain is Extracellular. Residue Asn-20 is glycosylated (N-linked (GlcNAc...) asparagine). Residues 42–62 (VCLAVCAFIVLENLAVLLVLV) traverse the membrane as a helical segment. Topologically, residues 63 to 68 (RHPRFH) are cytoplasmic. The helical transmembrane segment at 69-89 (APMFLLLGSLTLSDLLAGAAY) threads the bilayer. Residues 90-111 (ATNILLSGPLTLRLSPALWFAR) are Extracellular-facing. A helical transmembrane segment spans residues 112–132 (EGGVFVALAASVLSLLAIALE). At 133–151 (RHLTMARRGPAPAASRART) the chain is on the cytoplasmic side. A helical transmembrane segment spans residues 152-172 (LAMAVAAWGASLLLGLLPALG). Topologically, residues 173-192 (WNCLGRLETCSTVLPLYAKA) are extracellular. A helical membrane pass occupies residues 193–213 (YVLFCVLAFLGILAAICALYA). Over 214-253 (RIYCQVRANARRLRAGPGSRRATSSSRSRHTPRSLALLRT) the chain is Cytoplasmic. A helical transmembrane segment spans residues 254–274 (LSVVLLAFVACWGPLFLLLLL). The Extracellular segment spans residues 275–288 (DVACPARACPVLLQ). Residues 289–309 (ADPFLGLAMANSLLNPIIYTF) traverse the membrane as a helical segment. Topologically, residues 310-400 (TNRDLRHALL…NRSLVPTATD (91 aa)) are cytoplasmic. Residue Cys-324 is the site of S-palmitoyl cysteine attachment. The tract at residues 331 to 400 (QDSSNSLQRS…NRSLVPTATD (70 aa)) is disordered. 3 positions are modified to phosphoserine: Ser-340, Ser-342, and Ser-384. Polar residues predominate over residues 360–400 (DRSSSPSEHLSPQQDGVDTSCSTGSPGVATANRSLVPTATD).

This sequence belongs to the G-protein coupled receptor 1 family. As to expression, expressed in spleen and brain. In the CNS expression is restricted to oligodendrocytes.

The protein resides in the cell membrane. Its function is as follows. Receptor for the lysosphingolipid sphingosine 1-phosphate (S1P). S1P is a bioactive lysophospholipid that elicits diverse physiological effect on most types of cells and tissues. Is coupled to both the G(i/0)alpha and G(12) subclass of heteromeric G-proteins. S1P activation on oligodendroglial cells modulates two distinct functional pathways mediating either process retraction or cell survival. S1P activation on O4-positive pre-oligodendrocytes induces process retraction via a Rho kinase/collapsin response-mediated protein signaling pathway. The S1P-induced survival of mature oligodendrocytes is mediated through a pertussis toxin-sensitive, Akt-dependent pathway. S1P activation on oligodendroglial cells modulates two distinct functional pathways mediating either process retraction or cell survival. These effects depend on the developmental stage of the cell. The protein is Sphingosine 1-phosphate receptor 5 (S1pr5) of Mus musculus (Mouse).